The chain runs to 199 residues: N-(5'-phosphoribosyl)anthranilate isomerase (199 aa).

This sequence belongs to the TrpF family.

The enzyme catalyses N-(5-phospho-beta-D-ribosyl)anthranilate = 1-(2-carboxyphenylamino)-1-deoxy-D-ribulose 5-phosphate. The protein operates within amino-acid biosynthesis; L-tryptophan biosynthesis; L-tryptophan from chorismate: step 3/5. The protein is N-(5'-phosphoribosyl)anthranilate isomerase of Sulfolobus acidocaldarius (strain ATCC 33909 / DSM 639 / JCM 8929 / NBRC 15157 / NCIMB 11770).